The primary structure comprises 459 residues: Transcription factor mlcR (459 aa).

Positions 21–53 form a DNA-binding region, zn(2)-C6 fungal-type; it reads CDRCHAQKLKCTGSNANLVRAQCQRCQQAGLRC. 2 disordered regions span residues 64–84 and 135–170; these read LHKEAAAGTTRATETSQPMTA and DPESFPGGWPQPNTFRDDANSNESSGIPDLGYDFEG. Residues 69–78 are compositionally biased toward low complexity; it reads AAGTTRATET.

It localises to the nucleus. Transcription factor that regulates the gene cluster that mediates the biosynthesis of compactin, also known as mevastatin or ML-236B, and which acts as a potent competitive inhibitor of HMG-CoA reductase. Binds to the consensus-binding motif 5'-WCGG-N(6)-TCGG-3' of target genes. The polypeptide is Transcription factor mlcR (Penicillium citrinum).